The sequence spans 382 residues: uncharacterized protein (382 aa).

The N-terminal stretch at 1–25 (MKKWMAAVFVMMLMLCFGGIENVKA) is a signal peptide. Serine 186 acts as the Nucleophile in catalysis. Residues aspartate 354 and histidine 357 contribute to the active site.

This sequence belongs to the 'GDSL' lipolytic enzyme family.

This is an uncharacterized protein from Bacillus subtilis (strain 168).